The primary structure comprises 72 residues: UPF0352 protein NTHI1007 (72 aa).

This sequence belongs to the UPF0352 family.

This is UPF0352 protein NTHI1007 from Haemophilus influenzae (strain 86-028NP).